Reading from the N-terminus, the 417-residue chain is Biofilm dispersion protein BdlA (417 aa).

Positions 1–66 (MAALDRSMAR…RRFWERLRRG (66 aa)) constitute a PAS 1 domain. Residues 67 to 114 (EHFSGRCKRITREGRPLWLEATYNPVRDGQGRLLKVVKYASDIDAIVH) enclose the PAC 1 domain. One can recognise a PAS 2 domain in the interval 115–188 (QEHEMQSKLD…ADLWRRLNRG (74 aa)). The 51-residue stretch at 191 to 241 (VTGQFRRVHRNGQPVWLEASYNPVYDADGKLYKVVKFASDVSDRMRRYQAE) folds into the PAC 2 domain. A Methyl-accepting transducer domain is found at 242–417 (ADNAHQAHTL…QFSRTLNADL (176 aa)).

Functionally, essential for biofilm dispersion by sensing environmental cues. May be involved in sensing and transducing signals within cells, resulting in the modulation of c-di-GMP levels, swimming motility and adhesiveness of the bacterial cell surface. The protein is Biofilm dispersion protein BdlA (bdlA) of Pseudomonas aeruginosa (strain ATCC 15692 / DSM 22644 / CIP 104116 / JCM 14847 / LMG 12228 / 1C / PRS 101 / PAO1).